A 305-amino-acid chain; its full sequence is Probable G-protein coupled receptor 141 (305 aa).

At M1–S22 the chain is on the extracellular side. N5 and N9 each carry an N-linked (GlcNAc...) asparagine glycan. Residues L23 to V43 traverse the membrane as a helical segment. The Cytoplasmic segment spans residues K44–V50. Residues T51 to F71 form a helical membrane-spanning segment. Residues R72 to K89 lie on the Extracellular side of the membrane. Residues F90–L110 traverse the membrane as a helical segment. The Cytoplasmic portion of the chain corresponds to V111–H131. A helical membrane pass occupies residues A132–V152. Residues S153 to Y183 lie on the Extracellular side of the membrane. The helical transmembrane segment at M184–I204 threads the bilayer. Topologically, residues M205–N227 are cytoplasmic. Residues L228–Y248 traverse the membrane as a helical segment. Over L249–E267 the chain is Extracellular. Residues I268–S288 form a helical membrane-spanning segment. Residues H289 to R305 are Cytoplasmic-facing.

Belongs to the G-protein coupled receptor 1 family.

The protein localises to the cell membrane. Orphan receptor. The chain is Probable G-protein coupled receptor 141 (GPR141) from Homo sapiens (Human).